The chain runs to 146 residues: Angiogenin (146 aa).

The N-terminal stretch at 1–24 is a signal peptide; that stretch reads MVMGLGLFLLVFMLGLGLTPPTLA. A Pyrrolidone carboxylic acid modification is found at Gln25. His37 (proton acceptor) is an active-site residue. Arg45 serves as a coordination point for tRNA. 3 disulfides stabilise this stretch: Cys50-Cys105, Cys63-Cys116, and Cys81-Cys131. The short motif at 55-59 is the Nucleolar localization signal element; the sequence is RRRGL. Cys105 and Ile127 together coordinate tRNA. The Proton donor role is filled by His138.

Belongs to the pancreatic ribonuclease family. Homodimer. Interacts with RNH1; inhibiting ANG ribonuclease activity. Interacts with PCNA.

It localises to the secreted. The protein localises to the nucleus. The protein resides in the nucleolus. It is found in the cytoplasm. Its subcellular location is the stress granule. With respect to regulation, has weak tRNA ribonuclease activity by itself due to partial autoinhibition by its C-terminus, which folds into a short alpha-helix that partially occludes the substrate-binding site. In absence of stress, the ribonuclease activity is inhibited by RNH1 in the cytoplasm. In response to stress, dissociates from RNH1 in the cytoplasm and associates with cytoplasmic ribosomes with vacant A-sites: ribosomes directly activate the tRNA ribonuclease activity of ANG by refolding the C-terminal alpha-helix. In response to stress, the angiogenic activity of ANG is inhibited by RNH1 in the nucleus. In terms of biological role, secreted ribonuclease that can either promote or restrict cell proliferation of target cells, depending on the context. Endocytosed in target cells via its receptor PLXNB2 and translocates to the cytoplasm or nucleus. Under stress conditions, localizes to the cytoplasm and promotes the assembly of stress granules (SGs): specifically cleaves a subset of tRNAs within anticodon loops to produce tRNA-derived stress-induced fragments (tiRNAs), resulting in translation repression and inhibition of cell proliferation. tiRNas also prevent formation of apoptosome, thereby promoting cell survival. Preferentially cleaves RNAs between a pyrimidine and an adenosine residue, suggesting that it cleaves the anticodon loop of tRNA(Ala) (32-UUAGCAU-38) after positions 33 and 36. Cleaves a subset of tRNAs, including tRNA(Ala), tRNA(Glu), tRNA(Gly), tRNA(Lys), tRNA(Val), tRNA(His), tRNA(Asp) and tRNA(Sec). Under growth conditions and in differentiated cells, translocates to the nucleus and stimulates ribosomal RNA (rRNA) transcription, including that containing the initiation site sequences of 45S rRNA, thereby promoting cell growth and proliferation. Angiogenin induces vascularization of normal and malignant tissues via its ability to promote rRNA transcription. Involved in hematopoietic stem and progenitor cell (HSPC) growth and survival by promoting rRNA transcription in growth conditions and inhibiting translation in response to stress, respectively. Mediates the crosstalk between myeloid and intestinal epithelial cells to protect the intestinal epithelial barrier integrity: secreted by myeloid cells and promotes intestinal epithelial cells proliferation and survival. Also mediates osteoclast-endothelial cell crosstalk in growing bone: produced by osteoclasts and protects the neighboring vascular cells against senescence by promoting rRNA transcription. This Trachypithecus francoisi (Francois' leaf monkey) protein is Angiogenin (ANG).